The following is a 549-amino-acid chain: Chaperonin GroEL (549 aa).

Residues 30–33, K51, 87–91, G415, 479–481, and D495 each bind ATP; these read TLGP, DGTTT, and NAA.

It belongs to the chaperonin (HSP60) family. In terms of assembly, forms a cylinder of 14 subunits composed of two heptameric rings stacked back-to-back. Interacts with the co-chaperonin GroES.

Its subcellular location is the cytoplasm. The catalysed reaction is ATP + H2O + a folded polypeptide = ADP + phosphate + an unfolded polypeptide.. Together with its co-chaperonin GroES, plays an essential role in assisting protein folding. The GroEL-GroES system forms a nano-cage that allows encapsulation of the non-native substrate proteins and provides a physical environment optimized to promote and accelerate protein folding. This chain is Chaperonin GroEL, found in Leptothrix cholodnii (strain ATCC 51168 / LMG 8142 / SP-6) (Leptothrix discophora (strain SP-6)).